A 386-amino-acid polypeptide reads, in one-letter code: MKKSFLFTSESVTEGHPDKMADQISDAVLDYIIERDKKARVACETLVSNGFCVIAGELKTSVYAPMQEIARKVVQEIGYTDALYGFDYRSAAVLNGIGEQSPDINQGVDREDGEIGAGDQGLMFGYACKETPSLMPLPIWLSHRLTEGLAKKRKDGTLPFLRPDGKSQVTVRYEDGKPVSIDTIVISTQHSPETQQSHLKDAVIEEIVQKVLPQEYLNDNIRYFVNPTGKFVIGGPQGDAGLTGRKIIVDTYGGSCPHGGGAFSGKDPSKVDRSAAYAARYVAKNLVASGVCDKAIVQVAYAIGVVEPVSILVDTQGTGKVEDSKLTECVKAVFRLTPKGIIESLDLLRPIYRKTAAYGHFGRELNEFSWEKTDKVEAIKDFCGIK.

Histidine 16 serves as a coordination point for ATP. Aspartate 18 contacts Mg(2+). Position 44 (glutamate 44) interacts with K(+). L-methionine-binding residues include glutamate 57 and glutamine 100. Positions glutamine 100–arginine 110 are flexible loop. ATP-binding positions include aspartate 164–lysine 166, lysine 230–phenylalanine 231, aspartate 239, arginine 245–lysine 246, alanine 262, and lysine 266. Position 239 (aspartate 239) interacts with L-methionine. Residue lysine 270 participates in L-methionine binding.

Belongs to the AdoMet synthase family. As to quaternary structure, homotetramer; dimer of dimers. The cofactor is Mg(2+). K(+) serves as cofactor.

Its subcellular location is the cytoplasm. It carries out the reaction L-methionine + ATP + H2O = S-adenosyl-L-methionine + phosphate + diphosphate. Its pathway is amino-acid biosynthesis; S-adenosyl-L-methionine biosynthesis; S-adenosyl-L-methionine from L-methionine: step 1/1. Catalyzes the formation of S-adenosylmethionine (AdoMet) from methionine and ATP. The overall synthetic reaction is composed of two sequential steps, AdoMet formation and the subsequent tripolyphosphate hydrolysis which occurs prior to release of AdoMet from the enzyme. This Helicobacter hepaticus (strain ATCC 51449 / 3B1) protein is S-adenosylmethionine synthase.